Here is a 158-residue protein sequence, read N- to C-terminus: Transcription elongation factor GreA (158 aa).

Positions 4–75 form a coiled coil; it reads EKTYPMTQEG…TQLENMIRNA (72 aa).

Belongs to the GreA/GreB family.

In terms of biological role, necessary for efficient RNA polymerase transcription elongation past template-encoded arresting sites. The arresting sites in DNA have the property of trapping a certain fraction of elongating RNA polymerases that pass through, resulting in locked ternary complexes. Cleavage of the nascent transcript by cleavage factors such as GreA or GreB allows the resumption of elongation from the new 3'terminus. GreA releases sequences of 2 to 3 nucleotides. This chain is Transcription elongation factor GreA, found in Bacillus cereus (strain ATCC 10987 / NRS 248).